Reading from the N-terminus, the 230-residue chain is Probable endonuclease C19F8.04c (230 aa).

The chain crosses the membrane as a helical span at residues 10–27 (AIIGTGLITTSIGGFFFL). In terms of domain architecture, TNase-like spans 55–216 (KTMFGYVTRV…KKKKLSLWSQ (162 aa)). R104 is an active-site residue. D109 lines the Ca(2+) pocket. Active-site residues include E112 and R152.

The protein belongs to the LCL3 family.

Its subcellular location is the mitochondrion. It is found in the membrane. The sequence is that of Probable endonuclease C19F8.04c from Schizosaccharomyces pombe (strain 972 / ATCC 24843) (Fission yeast).